The chain runs to 80 residues: Toxin TdNa1 (80 aa).

The signal sequence occupies residues 1–20 (MKGIILFISCLMLIDVVVES). In terms of domain architecture, LCN-type CS-alpha/beta spans 21-79 (RDAYPADWRGCKFSCFWGSSSWCNEECTSLGGSSGYCAWPACWCYGLPDSVRYYNNKCH). 4 cysteine pairs are disulfide-bonded: Cys-31-Cys-78, Cys-35-Cys-57, Cys-43-Cys-62, and Cys-47-Cys-64.

Belongs to the long (4 C-C) scorpion toxin superfamily. Sodium channel inhibitor family. Beta subfamily. Expressed by the venom gland.

Its subcellular location is the secreted. Its function is as follows. Inhibits the sodium (Nav) currents in an apparent irreversible manner. Produces small depolarization and induces repetitive firing in squid axons. Is specific for arthropods (crickets, triatomides, crabs and squids), but is non-toxic to mice. The protein is Toxin TdNa1 of Tityus discrepans (Venezuelan scorpion).